The following is a 215-amino-acid chain: MRTGIIAQKVGMTSVFNDKGERISLTLVKVDDCQVVGHKTLEKHGYNALVIGVKDKKISRVTKPMKQVFANAKISPKTKLKEFRISEEHFIDIATSLEVDHFTAGQFVDITATTIGKGFAGSMKRHNFRGLEASHGVSISHRSHGSTGQRQDPGKVFRGKKMAGHMGCNQVTIQNLKIFAVDKERKLIMIQGSIPGHKNSYLSVKDAIKKISIIV.

Gln-151 carries the post-translational modification N5-methylglutamine.

Belongs to the universal ribosomal protein uL3 family. As to quaternary structure, part of the 50S ribosomal subunit. Forms a cluster with proteins L14 and L19. Methylated by PrmB.

Its function is as follows. One of the primary rRNA binding proteins, it binds directly near the 3'-end of the 23S rRNA, where it nucleates assembly of the 50S subunit. The sequence is that of Large ribosomal subunit protein uL3 from Rickettsia massiliae (strain Mtu5).